The sequence spans 557 residues: Membrane protein insertase YidC (557 aa).

Transmembrane regions (helical) follow at residues 6 to 26 (TILW…WQVH), 219 to 239 (IGPF…IYTD), 367 to 387 (IVGN…LAFF), 437 to 457 (LGGC…YWVL), and 514 to 534 (MPIV…LYWV).

It belongs to the OXA1/ALB3/YidC family. Type 1 subfamily. Interacts with the Sec translocase complex via SecD. Specifically interacts with transmembrane segments of nascent integral membrane proteins during membrane integration.

It localises to the cell inner membrane. Its function is as follows. Required for the insertion and/or proper folding and/or complex formation of integral membrane proteins into the membrane. Involved in integration of membrane proteins that insert both dependently and independently of the Sec translocase complex, as well as at least some lipoproteins. Aids folding of multispanning membrane proteins. This chain is Membrane protein insertase YidC, found in Polynucleobacter asymbioticus (strain DSM 18221 / CIP 109841 / QLW-P1DMWA-1) (Polynucleobacter necessarius subsp. asymbioticus).